The following is a 261-amino-acid chain: ATP synthase subunit a (261 aa).

7 helical membrane passes run 31–51 (IAFT…LIFM), 64–84 (WQAA…TNIG), 97–117 (LFMF…VVGV), 126–146 (LTVT…VGFW), 166–188 (IPMI…GLRL), 201–223 (VLAG…VSIP), and 235–255 (ELLV…LYLN).

This sequence belongs to the ATPase A chain family. F-type ATPases have 2 components, CF(1) - the catalytic core - and CF(0) - the membrane proton channel. CF(1) has five subunits: alpha(3), beta(3), gamma(1), delta(1), epsilon(1). CF(0) has three main subunits: a(1), b(2) and c(9-12). The alpha and beta chains form an alternating ring which encloses part of the gamma chain. CF(1) is attached to CF(0) by a central stalk formed by the gamma and epsilon chains, while a peripheral stalk is formed by the delta and b chains.

It is found in the cell inner membrane. In terms of biological role, key component of the proton channel; it plays a direct role in the translocation of protons across the membrane. The polypeptide is ATP synthase subunit a (Rhizorhabdus wittichii (strain DSM 6014 / CCUG 31198 / JCM 15750 / NBRC 105917 / EY 4224 / RW1) (Sphingomonas wittichii)).